The sequence spans 392 residues: Putative cystathionine gamma-lyase (392 aa).

Over residues 1 to 10 the composition is skewed to polar residues; that stretch reads MSDSATTDSA. Residues 1 to 41 form a disordered region; it reads MSDSATTDSAGTGGERSASAPGDGTRAVRAGLPEPVKHEPT. Position 216 is an N6-(pyridoxal phosphate)lysine (lysine 216).

The protein belongs to the trans-sulfuration enzymes family. Pyridoxal 5'-phosphate serves as cofactor.

It is found in the cytoplasm. It carries out the reaction L,L-cystathionine + H2O = 2-oxobutanoate + L-cysteine + NH4(+). It functions in the pathway amino-acid biosynthesis; L-cysteine biosynthesis; L-cysteine from L-homocysteine and L-serine: step 2/2. This chain is Putative cystathionine gamma-lyase (cysA), found in Streptomyces coelicolor (strain ATCC BAA-471 / A3(2) / M145).